The chain runs to 83 residues: Conotoxin Pu6.1 (83 aa).

A signal peptide spans methionine 1–glycine 19. The propeptide occupies alanine 20 to proline 42. Cystine bridges form between cysteine 43–cysteine 57, cysteine 50–cysteine 62, and cysteine 56–cysteine 78.

This sequence belongs to the conotoxin I3 superfamily. In terms of tissue distribution, expressed by the venom duct.

The protein resides in the secreted. The polypeptide is Conotoxin Pu6.1 (Conus pulicarius (Flea-bitten cone)).